We begin with the raw amino-acid sequence, 196 residues long: Pyridoxal 5'-phosphate synthase subunit PdxT (196 aa).

47–49 is an L-glutamine binding site; the sequence is GES. C79 (nucleophile) is an active-site residue. L-glutamine-binding positions include R106 and 134–135; that span reads IR. Catalysis depends on charge relay system residues H170 and E172.

This sequence belongs to the glutaminase PdxT/SNO family. In terms of assembly, in the presence of PdxS, forms a dodecamer of heterodimers. Only shows activity in the heterodimer.

The catalysed reaction is aldehydo-D-ribose 5-phosphate + D-glyceraldehyde 3-phosphate + L-glutamine = pyridoxal 5'-phosphate + L-glutamate + phosphate + 3 H2O + H(+). The enzyme catalyses L-glutamine + H2O = L-glutamate + NH4(+). It participates in cofactor biosynthesis; pyridoxal 5'-phosphate biosynthesis. In terms of biological role, catalyzes the hydrolysis of glutamine to glutamate and ammonia as part of the biosynthesis of pyridoxal 5'-phosphate. The resulting ammonia molecule is channeled to the active site of PdxS. The sequence is that of Pyridoxal 5'-phosphate synthase subunit PdxT from Bacillus subtilis (strain 168).